The primary structure comprises 675 residues: MAQVAKKILVTCALPYANGSIHLGHMLEHIQADIWVRFQRMRGNQVHFICADDAHGTPIMLKAQQMGIEPEQMIAEMSQEHQQDFAGFAISYDNYHSTHSDENRELSSLIYGRLKANGYIKNRTISQLYDPEKGMFLPDRFVKGTCPKCKAPEQYGDNCEVCGATYSPTELIDPKSAVSGATPVMRESEHFFFDLPAFSDMLQAWTRSGALQEQVANKMQEWFDSGLQQWDITRDAPYFGFEVPDAPGKYFYVWLDAPIGYMGAFKNLCDKRGDLDFDEFWGKDAKTDLYHFIGKDIVYFHSLFWPAMLEGSNFRKPTNLFVHGYVTVNGAKMSKSRGTFIKAGTYLKYLDADCLRYYYAAKLSSRIDDIDLNLEDFVQRVNADIVNKVVNLASRNAGFINKRFAGQLADQLADPVLYKTFTDAATSIADAYNNRESGKAIREIMALADVANRYVDEQAPWVVAKQEGRDADLHAICSMGINLFRVLMTYLKPVLPSLTERTEAFLNTELTWDSIEQPLLGHSITAFKALFNRIDLDKVNEMVASSKEDMAPATRVTGPLADDPIQETISFDDFAKVDMRIALIQQAEFVEGSDKLLKLTLELGGETRQIFSGIRSAYPDPKALEGRMTVMVANLAPRKMRFGVSEGMVMAAGPGGSDIFLLSPDSGAQPGMQVK.

A 'HIGH' region motif is present at residues 15–25; the sequence is PYANGSIHLGH. C146, C149, C159, and C162 together coordinate Zn(2+). The 'KMSKS' region signature appears at 332-336; the sequence is KMSKS. K335 contributes to the ATP binding site. In terms of domain architecture, tRNA-binding spans 573 to 675; that stretch reads DFAKVDMRIA…SGAQPGMQVK (103 aa).

It belongs to the class-I aminoacyl-tRNA synthetase family. MetG type 1 subfamily. In terms of assembly, homodimer. Zn(2+) serves as cofactor.

The protein resides in the cytoplasm. It carries out the reaction tRNA(Met) + L-methionine + ATP = L-methionyl-tRNA(Met) + AMP + diphosphate. Functionally, is required not only for elongation of protein synthesis but also for the initiation of all mRNA translation through initiator tRNA(fMet) aminoacylation. The chain is Methionine--tRNA ligase from Yersinia pseudotuberculosis serotype IB (strain PB1/+).